A 1155-amino-acid chain; its full sequence is DNA-directed RNA polymerase subunit beta (1155 aa).

The protein belongs to the RNA polymerase beta chain family. The RNAP catalytic core consists of 2 alpha, 1 beta, 1 beta' and 1 omega subunit. When a sigma factor is associated with the core the holoenzyme is formed, which can initiate transcription.

It catalyses the reaction RNA(n) + a ribonucleoside 5'-triphosphate = RNA(n+1) + diphosphate. DNA-dependent RNA polymerase catalyzes the transcription of DNA into RNA using the four ribonucleoside triphosphates as substrates. The polypeptide is DNA-directed RNA polymerase subunit beta (Thermobifida fusca (strain YX)).